A 196-amino-acid chain; its full sequence is ATP-dependent Clp protease proteolytic subunit (196 aa).

Residue Ser-101 is the Nucleophile of the active site. The active site involves His-126.

This sequence belongs to the peptidase S14 family. As to quaternary structure, component of the chloroplastic Clp protease core complex.

Its subcellular location is the plastid. It is found in the chloroplast stroma. It carries out the reaction Hydrolysis of proteins to small peptides in the presence of ATP and magnesium. alpha-casein is the usual test substrate. In the absence of ATP, only oligopeptides shorter than five residues are hydrolyzed (such as succinyl-Leu-Tyr-|-NHMec, and Leu-Tyr-Leu-|-Tyr-Trp, in which cleavage of the -Tyr-|-Leu- and -Tyr-|-Trp bonds also occurs).. Cleaves peptides in various proteins in a process that requires ATP hydrolysis. Has a chymotrypsin-like activity. Plays a major role in the degradation of misfolded proteins. The polypeptide is ATP-dependent Clp protease proteolytic subunit (Coffea arabica (Arabian coffee)).